Consider the following 51-residue polypeptide: MSHNMKGQKKRLAKAHKQNTRVPVWVIVKTNRKVVSHPRRRHWRRRSLDVK.

This sequence belongs to the eukaryotic ribosomal protein eL39 family.

This is Large ribosomal subunit protein eL39 from Methanosarcina acetivorans (strain ATCC 35395 / DSM 2834 / JCM 12185 / C2A).